The following is a 299-amino-acid chain: Regucalcin (299 aa).

Glu18 provides a ligand contact to a divalent metal cation. Substrate is bound by residues Arg101, Asn103, and Glu121. Asn154 and Asp204 together coordinate a divalent metal cation. The active-site Proton donor/acceptor is Asp204. N6-succinyllysine is present on residues Lys244 and Lys253.

Belongs to the SMP-30/CGR1 family. As to quaternary structure, monomer. Requires Zn(2+) as cofactor. Mn(2+) serves as cofactor. The cofactor is Ca(2+). Mg(2+) is required as a cofactor.

The protein localises to the cytoplasm. It carries out the reaction D-glucono-1,5-lactone + H2O = D-gluconate + H(+). It participates in cofactor biosynthesis; L-ascorbate biosynthesis via UDP-alpha-D-glucuronate pathway; L-ascorbate from UDP-alpha-D-glucuronate: step 3/4. In terms of biological role, gluconolactonase with low activity towards other sugar lactones, including gulonolactone and galactonolactone. Catalyzes a key step in ascorbic acid (vitamin C) biosynthesis. Can also hydrolyze diisopropyl phosphorofluoridate and phenylacetate (in vitro). Calcium-binding protein. Modulates Ca(2+) signaling, and Ca(2+)-dependent cellular processes and enzyme activities. The protein is Regucalcin (RGN) of Bos taurus (Bovine).